We begin with the raw amino-acid sequence, 373 residues long: S-adenosylmethionine:tRNA ribosyltransferase-isomerase (373 aa).

This sequence belongs to the QueA family. Monomer.

It is found in the cytoplasm. It catalyses the reaction 7-aminomethyl-7-carbaguanosine(34) in tRNA + S-adenosyl-L-methionine = epoxyqueuosine(34) in tRNA + adenine + L-methionine + 2 H(+). It functions in the pathway tRNA modification; tRNA-queuosine biosynthesis. Transfers and isomerizes the ribose moiety from AdoMet to the 7-aminomethyl group of 7-deazaguanine (preQ1-tRNA) to give epoxyqueuosine (oQ-tRNA). This chain is S-adenosylmethionine:tRNA ribosyltransferase-isomerase, found in Rhizobium etli (strain CIAT 652).